A 112-amino-acid polypeptide reads, in one-letter code: uncharacterized protein (112 aa).

2 coiled-coil regions span residues 15–53 (AEKK…FFKF) and 86–103 (LDYE…TERK).

This is an uncharacterized protein from Aquifex aeolicus (strain VF5).